Reading from the N-terminus, the 306-residue chain is Phosphoadenosine phosphosulfate reductase (306 aa).

Disordered regions lie at residues 1 to 30 (MPAK…VSGG) and 245 to 266 (YHST…KGQA).

This sequence belongs to the PAPS reductase family. CysH subfamily.

The catalysed reaction is [thioredoxin]-disulfide + sulfite + adenosine 3',5'-bisphosphate + 2 H(+) = [thioredoxin]-dithiol + 3'-phosphoadenylyl sulfate. The protein operates within sulfur metabolism; hydrogen sulfide biosynthesis; sulfite from sulfate: step 3/3. In terms of biological role, the NADP dependent reduction of PAPS into sulfite involves thioredoxin which probably plays the role of a thiol carrier. The sequence is that of Phosphoadenosine phosphosulfate reductase (sA) from Emericella nidulans (strain FGSC A4 / ATCC 38163 / CBS 112.46 / NRRL 194 / M139) (Aspergillus nidulans).